The chain runs to 188 residues: Adenine phosphoribosyltransferase (188 aa).

It belongs to the purine/pyrimidine phosphoribosyltransferase family. As to quaternary structure, homodimer.

It localises to the cytoplasm. It catalyses the reaction AMP + diphosphate = 5-phospho-alpha-D-ribose 1-diphosphate + adenine. It functions in the pathway purine metabolism; AMP biosynthesis via salvage pathway; AMP from adenine: step 1/1. Catalyzes a salvage reaction resulting in the formation of AMP, that is energically less costly than de novo synthesis. The protein is Adenine phosphoribosyltransferase of Paraburkholderia phymatum (strain DSM 17167 / CIP 108236 / LMG 21445 / STM815) (Burkholderia phymatum).